A 700-amino-acid chain; its full sequence is Elongation factor G (700 aa).

Residues 8–290 (ERYRNIGISA…AVIDYLPSPV (283 aa)) enclose the tr-type G domain. GTP-binding positions include 17–24 (AHIDAGKT), 88–92 (DTPGH), and 142–145 (NKMD).

The protein belongs to the TRAFAC class translation factor GTPase superfamily. Classic translation factor GTPase family. EF-G/EF-2 subfamily.

It is found in the cytoplasm. Its function is as follows. Catalyzes the GTP-dependent ribosomal translocation step during translation elongation. During this step, the ribosome changes from the pre-translocational (PRE) to the post-translocational (POST) state as the newly formed A-site-bound peptidyl-tRNA and P-site-bound deacylated tRNA move to the P and E sites, respectively. Catalyzes the coordinated movement of the two tRNA molecules, the mRNA and conformational changes in the ribosome. This Leptothrix cholodnii (strain ATCC 51168 / LMG 8142 / SP-6) (Leptothrix discophora (strain SP-6)) protein is Elongation factor G.